Here is a 153-residue protein sequence, read N- to C-terminus: Ubiquitin-conjugating enzyme E2 13 (153 aa).

The UBC core domain occupies 3–149 (SLPKRIIKET…AREWTKLYAK (147 aa)). Cysteine 87 (glycyl thioester intermediate) is an active-site residue. Lysine 92 participates in a covalent cross-link: Glycyl lysine isopeptide (Lys-Gly) (interchain with G-Cter in ubiquitin).

This sequence belongs to the ubiquitin-conjugating enzyme family. In terms of assembly, heterodimer with MMS2.

The catalysed reaction is S-ubiquitinyl-[E1 ubiquitin-activating enzyme]-L-cysteine + [E2 ubiquitin-conjugating enzyme]-L-cysteine = [E1 ubiquitin-activating enzyme]-L-cysteine + S-ubiquitinyl-[E2 ubiquitin-conjugating enzyme]-L-cysteine.. It functions in the pathway protein modification; protein ubiquitination. In terms of biological role, has a role in the DNA error-free postreplication repair (PRR) pathway. The UBC13/MMS2 heterodimer catalyzes the synthesis of non-canonical poly-ubiquitin chains that are linked through 'Lys-63'. This chain is Ubiquitin-conjugating enzyme E2 13 (UBC13), found in Saccharomyces cerevisiae (strain ATCC 204508 / S288c) (Baker's yeast).